The primary structure comprises 366 residues: Phospho-N-acetylmuramoyl-pentapeptide-transferase (366 aa).

10 consecutive transmembrane segments (helical) span residues Ala-27–Leu-47, Thr-71–Ala-91, Leu-93–Phe-113, Leu-134–Ala-154, Phe-174–Gly-194, Gly-205–Ala-225, Leu-245–Pro-265, Ala-268–Val-288, Ile-294–Val-314, and Gln-343–Leu-363.

Belongs to the glycosyltransferase 4 family. MraY subfamily. Mg(2+) serves as cofactor.

Its subcellular location is the cell inner membrane. The catalysed reaction is UDP-N-acetyl-alpha-D-muramoyl-L-alanyl-gamma-D-glutamyl-meso-2,6-diaminopimeloyl-D-alanyl-D-alanine + di-trans,octa-cis-undecaprenyl phosphate = di-trans,octa-cis-undecaprenyl diphospho-N-acetyl-alpha-D-muramoyl-L-alanyl-D-glutamyl-meso-2,6-diaminopimeloyl-D-alanyl-D-alanine + UMP. It functions in the pathway cell wall biogenesis; peptidoglycan biosynthesis. In terms of biological role, catalyzes the initial step of the lipid cycle reactions in the biosynthesis of the cell wall peptidoglycan: transfers peptidoglycan precursor phospho-MurNAc-pentapeptide from UDP-MurNAc-pentapeptide onto the lipid carrier undecaprenyl phosphate, yielding undecaprenyl-pyrophosphoryl-MurNAc-pentapeptide, known as lipid I. The polypeptide is Phospho-N-acetylmuramoyl-pentapeptide-transferase (Rhizobium leguminosarum bv. trifolii (strain WSM2304)).